The chain runs to 421 residues: Tyrosine--tRNA ligase (421 aa).

Residue Y35 coordinates L-tyrosine. The 'HIGH' region signature appears at 40–49 (PTADSLHIGH). 2 residues coordinate L-tyrosine: Y170 and Q174. The 'KMSKS' region motif lies at 232–236 (KFGKT). K235 provides a ligand contact to ATP. The 67-residue stretch at 355-421 (LSLVDVLVES…GKKKYFLITY (67 aa)) folds into the S4 RNA-binding domain.

The protein belongs to the class-I aminoacyl-tRNA synthetase family. TyrS type 1 subfamily. In terms of assembly, homodimer.

The protein resides in the cytoplasm. It catalyses the reaction tRNA(Tyr) + L-tyrosine + ATP = L-tyrosyl-tRNA(Tyr) + AMP + diphosphate + H(+). In terms of biological role, catalyzes the attachment of tyrosine to tRNA(Tyr) in a two-step reaction: tyrosine is first activated by ATP to form Tyr-AMP and then transferred to the acceptor end of tRNA(Tyr). The chain is Tyrosine--tRNA ligase from Bacillus velezensis (strain DSM 23117 / BGSC 10A6 / LMG 26770 / FZB42) (Bacillus amyloliquefaciens subsp. plantarum).